A 337-amino-acid polypeptide reads, in one-letter code: Phosphatidate cytidylyltransferase, mitochondrial (337 aa).

This sequence belongs to the TAM41 family. Mg(2+) is required as a cofactor. As to expression, brain and liver.

It is found in the mitochondrion inner membrane. It catalyses the reaction a 1,2-diacyl-sn-glycero-3-phosphate + CTP + H(+) = a CDP-1,2-diacyl-sn-glycerol + diphosphate. Its pathway is phospholipid metabolism; CDP-diacylglycerol biosynthesis; CDP-diacylglycerol from sn-glycerol 3-phosphate: step 3/3. Functionally, catalyzes the conversion of phosphatidic acid (PA) to CDP-diacylglycerol (CDP-DAG), an essential intermediate in the synthesis of phosphatidylglycerol, cardiolipin and phosphatidylinositol. This chain is Phosphatidate cytidylyltransferase, mitochondrial (Tamm41), found in Rattus norvegicus (Rat).